Here is a 130-residue protein sequence, read N- to C-terminus: S-adenosylmethionine decarboxylase proenzyme (130 aa).

The active-site Schiff-base intermediate with substrate; via pyruvic acid is the Ser-63. Ser-63 carries the post-translational modification Pyruvic acid (Ser); by autocatalysis. Residue His-68 is the Proton acceptor; for processing activity of the active site. Cys-83 acts as the Proton donor; for catalytic activity in catalysis.

It belongs to the prokaryotic AdoMetDC family. Type 1 subfamily. In terms of assembly, heterotetramer of two alpha and two beta chains arranged as a dimer of alpha/beta heterodimers. Pyruvate is required as a cofactor. In terms of processing, is synthesized initially as an inactive proenzyme. Formation of the active enzyme involves a self-maturation process in which the active site pyruvoyl group is generated from an internal serine residue via an autocatalytic post-translational modification. Two non-identical subunits are generated from the proenzyme in this reaction, and the pyruvate is formed at the N-terminus of the alpha chain, which is derived from the carboxyl end of the proenzyme. The post-translation cleavage follows an unusual pathway, termed non-hydrolytic serinolysis, in which the side chain hydroxyl group of the serine supplies its oxygen atom to form the C-terminus of the beta chain, while the remainder of the serine residue undergoes an oxidative deamination to produce ammonia and the pyruvoyl group blocking the N-terminus of the alpha chain.

The catalysed reaction is S-adenosyl-L-methionine + H(+) = S-adenosyl 3-(methylsulfanyl)propylamine + CO2. The protein operates within amine and polyamine biosynthesis; S-adenosylmethioninamine biosynthesis; S-adenosylmethioninamine from S-adenosyl-L-methionine: step 1/1. In terms of biological role, catalyzes the decarboxylation of S-adenosylmethionine to S-adenosylmethioninamine (dcAdoMet), the propylamine donor required for the synthesis of the polyamines spermine and spermidine from the diamine putrescine. This Thermosipho melanesiensis (strain DSM 12029 / CIP 104789 / BI429) protein is S-adenosylmethionine decarboxylase proenzyme.